The following is a 901-amino-acid chain: Protein translocase subunit SecA (901 aa).

ATP contacts are provided by residues Gln-87, 105 to 109 (GEGKT), and Asp-512. Positions 859–901 (HQDDDSAAAAALAAQTGERKVGRNDPCPCGSGKKYKQCHGRLQ) are disordered. Positions 885, 887, 896, and 897 each coordinate Zn(2+). Basic residues predominate over residues 891 to 901 (KKYKQCHGRLQ).

It belongs to the SecA family. Monomer and homodimer. Part of the essential Sec protein translocation apparatus which comprises SecA, SecYEG and auxiliary proteins SecDF-YajC and YidC. Zn(2+) serves as cofactor.

Its subcellular location is the cell inner membrane. The protein localises to the cytoplasm. The catalysed reaction is ATP + H2O + cellular proteinSide 1 = ADP + phosphate + cellular proteinSide 2.. Part of the Sec protein translocase complex. Interacts with the SecYEG preprotein conducting channel. Has a central role in coupling the hydrolysis of ATP to the transfer of proteins into and across the cell membrane, serving both as a receptor for the preprotein-SecB complex and as an ATP-driven molecular motor driving the stepwise translocation of polypeptide chains across the membrane. This Escherichia coli (strain 55989 / EAEC) protein is Protein translocase subunit SecA.